A 258-amino-acid polypeptide reads, in one-letter code: MDLNLQDKVVIVTGGASGIGGAISMRLAEERAIPVVFARHAPDGAFLDALAQRQPRATYLPVELQDDAQCRDAVAQTIATFGRLDGLVNNAGVNDGIGLDAGRDAFVASLERNLIHYYAMAHYCVPHLKATRGAIVNISSKTAVTGQGNTSGYCASKGAQLALTREWAVALREHGVRVNAVIPAEVMTPLYRNWIATFEDPEAKLAEIAAKVPLGRRFTTPDEIADTAVFLLSPRASHTTGEWLFVDGGYTHLDRALV.

Positions 17, 19, 39, 40, 63, 64, and 90 each coordinate NADP(+). Residues N94, S140, K141, Q147, and Y153 each coordinate beta-L-fucose. NADP(+) is bound by residues Y153 and K157. Y153 (proton acceptor) is an active-site residue. 2 residues coordinate beta-L-fucose: A184 and E185. V186 and T188 together coordinate NADP(+).

This sequence belongs to the short-chain dehydrogenases/reductases (SDR) family. In terms of assembly, homotetramer; dimer of dimers.

The catalysed reaction is beta-L-fucose + NADP(+) = L-fucono-1,5-lactone + NADPH + H(+). It catalyses the reaction D-arabinose + NADP(+) = D-arabinono-1,5-lactone + NADPH + H(+). The protein operates within carbohydrate degradation; L-fucose degradation. L-fucose dehydrogenase involved in an L-fucose degradation pathway. Catalyzes the oxidation of L-fucose to L-fucono-1,5-lactone. Can also act on D-arabinose, with lower catalytic efficiency, and has weak activity with L-galactose and 4-deoxy-L-fucose. Shows a preference for NADP(+) over NAD(+). The protein is L-fucose dehydrogenase of Burkholderia multivorans (strain ATCC 17616 / 249).